The primary structure comprises 341 residues: UDP-3-O-(3-hydroxymyristoyl)glucosamine N-acyltransferase (341 aa).

The active-site Proton acceptor is the H239.

This sequence belongs to the transferase hexapeptide repeat family. LpxD subfamily. In terms of assembly, homotrimer.

The enzyme catalyses a UDP-3-O-[(3R)-3-hydroxyacyl]-alpha-D-glucosamine + a (3R)-hydroxyacyl-[ACP] = a UDP-2-N,3-O-bis[(3R)-3-hydroxyacyl]-alpha-D-glucosamine + holo-[ACP] + H(+). The catalysed reaction is UDP-3-O-[(3R)-3-hydroxytetradecanoyl]-alpha-D-glucosamine + (3R)-hydroxytetradecanoyl-[ACP] = UDP-2-N,3-O-bis[(3R)-3-hydroxytetradecanoyl]-alpha-D-glucosamine + holo-[ACP] + H(+). Its pathway is glycolipid biosynthesis; lipid IV(A) biosynthesis; lipid IV(A) from (3R)-3-hydroxytetradecanoyl-[acyl-carrier-protein] and UDP-N-acetyl-alpha-D-glucosamine: step 3/6. In terms of biological role, catalyzes the N-acylation of UDP-3-O-(hydroxytetradecanoyl)glucosamine using 3-hydroxytetradecanoyl-ACP as the acyl donor. Is involved in the biosynthesis of lipid A, a phosphorylated glycolipid that anchors the lipopolysaccharide to the outer membrane of the cell. This is UDP-3-O-(3-hydroxymyristoyl)glucosamine N-acyltransferase from Escherichia coli O157:H7.